The sequence spans 390 residues: Magnesium-protoporphyrin IX monomethyl ester [oxidative] cyclase (390 aa).

This sequence belongs to the AcsF family. Requires Fe cation as cofactor.

The catalysed reaction is Mg-protoporphyrin IX 13-monomethyl ester + 3 NADPH + 3 O2 + 2 H(+) = 3,8-divinyl protochlorophyllide a + 3 NADP(+) + 5 H2O. The protein operates within porphyrin-containing compound metabolism; chlorophyll biosynthesis (light-independent). Functionally, catalyzes the formation of the isocyclic ring in chlorophyll biosynthesis. Mediates the cyclase reaction, which results in the formation of divinylprotochlorophyllide (Pchlide) characteristic of all chlorophylls from magnesium-protoporphyrin IX 13-monomethyl ester (MgPMME). The polypeptide is Magnesium-protoporphyrin IX monomethyl ester [oxidative] cyclase (Prochlorococcus marinus (strain MIT 9215)).